Here is a 317-residue protein sequence, read N- to C-terminus: MKKTSNKVVLVGTGAVGMSFIYSAVNQGLAEEYVLIDVNTKAAEGNAIDIQDTMAVLDKPFTIKAGTYEDCKDADLIVITAGRPQRPGETRLELIADNSRIMKGIAEAIKASGFNGVTVIASNPCDVLTTVYQQVTGYDEHSVVGAGTTLDSARLRRLVAEKLNVAPKSVNAYIMGEHGDSSVAAYSKATVMGQPISKYLAEGKITEADLEECWTRAIRMAYEIIERKGATYYGIGVCLNAISSAILRDEKTTFMVGAKLNGEYGQKGFYTGVPVILGSKGWETIIEWDLSDAEKAAFKKSCDALDATYQKAKEAIA.

3 residues coordinate NAD(+): V16, D37, and Y68. Residues Q85, R91, 123–126 (NPCD), and 151–154 (DSAR) each bind substrate. 121 to 123 (ASN) contributes to the NAD(+) binding site. The active-site Proton acceptor is the H178. Y222 is subject to Phosphotyrosine. Substrate is bound at residue T231.

Belongs to the LDH/MDH superfamily. LDH family. In terms of assembly, homotetramer.

Its subcellular location is the cytoplasm. The catalysed reaction is (S)-lactate + NAD(+) = pyruvate + NADH + H(+). It participates in fermentation; pyruvate fermentation to lactate; (S)-lactate from pyruvate: step 1/1. Functionally, catalyzes the conversion of lactate to pyruvate. The chain is L-lactate dehydrogenase from Mesoplasma florum (strain ATCC 33453 / NBRC 100688 / NCTC 11704 / L1) (Acholeplasma florum).